A 193-amino-acid polypeptide reads, in one-letter code: dTTP/UTP pyrophosphatase (193 aa).

Residue Asp-71 is the Proton acceptor of the active site.

The protein belongs to the Maf family. YhdE subfamily. The cofactor is a divalent metal cation.

Its subcellular location is the cytoplasm. It catalyses the reaction dTTP + H2O = dTMP + diphosphate + H(+). The catalysed reaction is UTP + H2O = UMP + diphosphate + H(+). Functionally, nucleoside triphosphate pyrophosphatase that hydrolyzes dTTP and UTP. May have a dual role in cell division arrest and in preventing the incorporation of modified nucleotides into cellular nucleic acids. The protein is dTTP/UTP pyrophosphatase of Geobacter sp. (strain M21).